Here is a 133-residue protein sequence, read N- to C-terminus: Ribulose bisphosphate carboxylase small subunit (133 aa).

This sequence belongs to the RuBisCO small chain family. In terms of assembly, heterohexadecamer of 8 large and 8 small subunits.

Functionally, ruBisCO catalyzes two reactions: the carboxylation of D-ribulose 1,5-bisphosphate, the primary event in carbon dioxide fixation, as well as the oxidative fragmentation of the pentose substrate. Both reactions occur simultaneously and in competition at the same active site. Although the small subunit is not catalytic it is essential for maximal activity. In Xanthobacter flavus, this protein is Ribulose bisphosphate carboxylase small subunit.